Consider the following 1169-residue polypeptide: Transcription-repair-coupling factor (1169 aa).

One can recognise a Helicase ATP-binding domain in the interval 634–795 (DMERARPMDR…MLGVRDLSVI (162 aa)). 647 to 654 (GDVGYGKT) provides a ligand contact to ATP. The short motif at 748–751 (DEEQ) is the DEEQ box element. Positions 809-970 (VLEQNTNFIK…GFKIAMRDLN (162 aa)) constitute a Helicase C-terminal domain.

It in the N-terminal section; belongs to the UvrB family. The protein in the C-terminal section; belongs to the helicase family. RecG subfamily.

Its subcellular location is the cytoplasm. Couples transcription and DNA repair by recognizing RNA polymerase (RNAP) stalled at DNA lesions. Mediates ATP-dependent release of RNAP and its truncated transcript from the DNA, and recruitment of nucleotide excision repair machinery to the damaged site. In Staphylococcus epidermidis (strain ATCC 35984 / DSM 28319 / BCRC 17069 / CCUG 31568 / BM 3577 / RP62A), this protein is Transcription-repair-coupling factor.